The following is a 151-amino-acid chain: Brain ribonuclease (151 aa).

A disordered region spans residues 1–25; it reads KESAAAKFRRQHMDAGSSSSGNSNY. Substrate-binding residues include lysine 7 and arginine 10. Histidine 12 (proton acceptor) is an active-site residue. 4 disulfides stabilise this stretch: cysteine 26–cysteine 84, cysteine 40–cysteine 95, cysteine 58–cysteine 110, and cysteine 65–cysteine 72. 41-45 lines the substrate pocket; that stretch reads KPVNT. The N-linked (GlcNAc...) asparagine glycan is linked to asparagine 62. Substrate-binding residues include lysine 66 and arginine 85. Residue histidine 119 is the Proton donor of the active site. The O-linked (GalNAc...) threonine glycan is linked to threonine 129. Serine 133 carries an O-linked (GalNAc...) serine glycan.

It belongs to the pancreatic ribonuclease family.

The protein localises to the secreted. The polypeptide is Brain ribonuclease (BRN) (Axis porcinus (Hog deer)).